The following is a 119-amino-acid chain: Microtubule nucleation factor SSNA1 (119 aa).

Residue threonine 2 is modified to N-acetylthreonine. Positions 2–32 are important for localization to the centrosome; that stretch reads TQQGAALQNYNNELVKCIEELCQKREELCRQ. Residues 13–70 are a coiled coil; the sequence is NELVKCIEELCQKREELCRQIQEEEDEKQRLQNEVRQLTEKLARVNENLARKIASRNE.

It belongs to the SSNA1 family. In terms of assembly, self-associates to form fibrils. Also forms dimers as well as monomers. Interacts with SPAST. Widely expressed.

It localises to the nucleus. It is found in the cytoplasm. The protein localises to the cytoskeleton. The protein resides in the microtubule organizing center. Its subcellular location is the centrosome. It localises to the centriole. It is found in the midbody. The protein localises to the flagellum basal body. The protein resides in the flagellum axoneme. Its subcellular location is the cell projection. It localises to the axon. In terms of biological role, microtubule-binding protein which stabilizes dynamic microtubules by slowing growth and shrinkage at both plus and minus ends and serves as a sensor of microtubule damage, protecting microtubules from the microtubule-severing enzyme SPAST. Induces microtubule branching which is mediated by the formation of long SSNA1 fibrils which guide microtubule protofilaments to split apart from the mother microtubule and form daughter microtubules. Plays a role in axon outgrowth and branching. Required for cell division. The sequence is that of Microtubule nucleation factor SSNA1 from Homo sapiens (Human).